Consider the following 485-residue polypeptide: MALSVEKTSSGREYKVKDLFQADFGRLELELAEVEMPGLMACRTEFGPSQPFKGARISGSLHMTIQTAVLIETLTALGAEVRWCSCNIFSSQDHAAAAIARDSAAVFAWKGETLEEYWWCTERCLDWGVGGGPDLIVDDGGDATLLIHEGVKAEEEFEKSGKVPDPESTDNPEFKIVLTIIRDGLKTDASKYRKMKERLVGVSEETTTGVKRLYQMQESGTLLFPAINVNDSVTKSKFDNLYGCRHSLPDGLMRATDVMIAGKVAVVCGYGDVGKGCAAALKQAGARVIVTEIDPICALQALMEGIQILTLEDVVSEADIFVTTTGNKDIIMVDHMRKMKNNAIVCNIGHFDNEIDMNGLETYPGVKRITIKPQTDRWVFPETKTGIIVLAEGRLMNLGCATGHPSFVMSCSFTNQVIAQLELWNEKASGKYEKKVYVLPKHLDEKVAALHLGKLGARLTKLTKSQSDYISIPIEGPYKLRLYRY.

Threonine 64, aspartate 139, and glutamate 205 together coordinate substrate. 206–208 (TTT) is an NAD(+) binding site. Substrate contacts are provided by lysine 235 and aspartate 239. NAD(+) contacts are provided by residues asparagine 240, 269–274 (GYGDVG), glutamate 292, asparagine 327, 348–350 (IGH), and asparagine 397.

The protein belongs to the adenosylhomocysteinase family. In terms of assembly, homotetramer. NAD(+) serves as cofactor.

The enzyme catalyses S-adenosyl-L-homocysteine + H2O = L-homocysteine + adenosine. It participates in amino-acid biosynthesis; L-homocysteine biosynthesis; L-homocysteine from S-adenosyl-L-homocysteine: step 1/1. Its function is as follows. Adenosylhomocysteine is a competitive inhibitor of S-adenosyl-L-methionine-dependent methyl transferase reactions; therefore adenosylhomocysteinase may play a key role in the control of methylations via regulation of the intracellular concentration of adenosylhomocysteine. The sequence is that of Adenosylhomocysteinase (SAHH) from Triticum aestivum (Wheat).